Here is a 220-residue protein sequence, read N- to C-terminus: Inner membrane protein YqjA (220 aa).

Over 1–27 (MELLTQLLQALWAQDFETLANPSMIGM) the chain is Periplasmic. The helical transmembrane segment at 28–48 (LYFVLFVILFLENGLLPAAFL) threads the bilayer. Over 49 to 52 (PGDS) the chain is Cytoplasmic. Transmembrane regions (helical) follow at residues 53–73 (LLVLVGVLIAKGAMGYPQTIL) and 74–94 (LLTVAASLGCWVSYIQGRWLG). At 95-154 (NTRTVQNWLSHLPAHYHQRAHHLFHKHGLSALLIGRFIAFVRTLLPTIAGLSGLNNARFQ) the chain is on the cytoplasmic side. The chain crosses the membrane as a helical span at residues 155–175 (FFNWMSGLLWVLILTTLGYML). The Periplasmic segment spans residues 176–191 (GKTPVFLKYEDQLMSC). Residues 192–212 (LMLLPVVLLVFGLAGSLVVLW) form a helical membrane-spanning segment. Topologically, residues 213 to 220 (KKKYGNRG) are cytoplasmic.

The protein belongs to the DedA family.

Its subcellular location is the cell inner membrane. Functionally, may be a membrane transporter required for proton motive force (PMF)-dependent drug efflux. Required, with YghB, for the proper export of certain periplasmic amidases and, possibly, other Tat substrates. May play a role in determining membrane lipid composition. The polypeptide is Inner membrane protein YqjA (yqjA) (Escherichia coli (strain K12)).